A 317-amino-acid polypeptide reads, in one-letter code: Ferrochelatase (317 aa).

Residues His191 and Glu271 each contribute to the Fe cation site.

The protein belongs to the ferrochelatase family.

The protein resides in the cytoplasm. It catalyses the reaction heme b + 2 H(+) = protoporphyrin IX + Fe(2+). It participates in porphyrin-containing compound metabolism; protoheme biosynthesis; protoheme from protoporphyrin-IX: step 1/1. In terms of biological role, catalyzes the ferrous insertion into protoporphyrin IX. The polypeptide is Ferrochelatase (Thermus thermophilus (strain ATCC BAA-163 / DSM 7039 / HB27)).